We begin with the raw amino-acid sequence, 265 residues long: Thymidine kinase 2, mitochondrial (265 aa).

A mitochondrion-targeting transit peptide spans 1-33 (MLLRPLRGWAALALRCFEPGSPGSPASGPGSRR). Residues 21 to 31 (SPGSPASGPGS) are compositionally biased toward low complexity. The segment at 21–45 (SPGSPASGPGSRRVQRGAWPSDKER) is disordered. 57–65 (GNIASGKTT) contributes to the ATP binding site. The Proton acceptor role is filled by glutamate 133.

Belongs to the DCK/DGK family. Homodimer.

It localises to the mitochondrion. The enzyme catalyses thymidine + ATP = dTMP + ADP + H(+). The catalysed reaction is 2'-deoxycytidine + ATP = dCMP + ADP + H(+). It catalyses the reaction 2'-deoxyuridine + ATP = dUMP + ADP + H(+). Functionally, phosphorylates thymidine, deoxycytidine, and deoxyuridine in the mitochondrial matrix. In non-replicating cells, where cytosolic dNTP synthesis is down-regulated, mtDNA synthesis depends solely on TK2 and DGUOK. This Macaca fascicularis (Crab-eating macaque) protein is Thymidine kinase 2, mitochondrial (TK2).